The primary structure comprises 323 residues: tRNA dimethylallyltransferase (323 aa).

An ATP-binding site is contributed by 16–23 (GPTASGKT). A substrate-binding site is contributed by 18–23 (TASGKT). Interaction with substrate tRNA regions lie at residues 41-44 (DSAL), 165-169 (QRIQR), 253-258 (RCVGYR), and 286-293 (KRQITWLR).

This sequence belongs to the IPP transferase family. In terms of assembly, monomer. The cofactor is Mg(2+).

The catalysed reaction is adenosine(37) in tRNA + dimethylallyl diphosphate = N(6)-dimethylallyladenosine(37) in tRNA + diphosphate. Its function is as follows. Catalyzes the transfer of a dimethylallyl group onto the adenine at position 37 in tRNAs that read codons beginning with uridine, leading to the formation of N6-(dimethylallyl)adenosine (i(6)A). This Ralstonia nicotianae (strain ATCC BAA-1114 / GMI1000) (Ralstonia solanacearum) protein is tRNA dimethylallyltransferase.